A 246-amino-acid polypeptide reads, in one-letter code: N-alpha-acetyltransferase 11 (246 aa).

The interval 1 to 58 (MNIRNARPEDLMNMQHCNLLCLPENYQMKYYFYHGLSWPQLSYIAEDEDGKIVGYVLA) is interaction with NAA15. Residues 1-152 (MNIRNARPED…DAYAMKRDLA (152 aa)) enclose the N-acetyltransferase domain. Positions 175–246 (EENQEAQDST…DSSEYLDSTS (72 aa)) are disordered. Positions 230-246 (SHSTDVQDSSEYLDSTS) are enriched in polar residues.

It belongs to the acetyltransferase family. ARD1 subfamily. As to quaternary structure, component of the N-terminal acetyltransferase A (NatA) complex composed of NAA11 and NAA15. Interacts with HIF1A.

The protein resides in the cytoplasm. Its subcellular location is the nucleus. It catalyses the reaction N-terminal glycyl-[protein] + acetyl-CoA = N-terminal N(alpha)-acetylglycyl-[protein] + CoA + H(+). It carries out the reaction N-terminal L-alanyl-[protein] + acetyl-CoA = N-terminal N(alpha)-acetyl-L-alanyl-[protein] + CoA + H(+). The catalysed reaction is N-terminal L-seryl-[protein] + acetyl-CoA = N-terminal N(alpha)-acetyl-L-seryl-[protein] + CoA + H(+). The enzyme catalyses N-terminal L-valyl-[protein] + acetyl-CoA = N-terminal N(alpha)-acetyl-L-valyl-[protein] + CoA + H(+). It catalyses the reaction N-terminal L-cysteinyl-[protein] + acetyl-CoA = N-terminal N(alpha)-acetyl-L-cysteinyl-[protein] + CoA + H(+). It carries out the reaction N-terminal L-threonyl-[protein] + acetyl-CoA = N-terminal N(alpha)-acetyl-L-threonyl-[protein] + CoA + H(+). Functionally, displays alpha (N-terminal) acetyltransferase activity. Proposed alternative catalytic subunit of the N-terminal acetyltransferase A (NatA) complex. The polypeptide is N-alpha-acetyltransferase 11 (Naa11) (Rattus norvegicus (Rat)).